We begin with the raw amino-acid sequence, 348 residues long: Alanine racemase (348 aa).

K34 functions as the Proton acceptor; specific for D-alanine in the catalytic mechanism. N6-(pyridoxal phosphate)lysine is present on K34. A substrate-binding site is contributed by R127. Residue Y243 is the Proton acceptor; specific for L-alanine of the active site. M291 is a substrate binding site.

Belongs to the alanine racemase family. The cofactor is pyridoxal 5'-phosphate.

It carries out the reaction L-alanine = D-alanine. It functions in the pathway amino-acid biosynthesis; D-alanine biosynthesis; D-alanine from L-alanine: step 1/1. Its function is as follows. Catalyzes the interconversion of L-alanine and D-alanine. May also act on other amino acids. In Coprothermobacter proteolyticus (strain ATCC 35245 / DSM 5265 / OCM 4 / BT), this protein is Alanine racemase (alr).